The following is a 238-amino-acid chain: tRNA (guanine-N(1)-)-methyltransferase (238 aa).

132–137 is an S-adenosyl-L-methionine binding site; it reads IGDYVL.

The protein belongs to the RNA methyltransferase TrmD family. As to quaternary structure, homodimer.

The protein localises to the cytoplasm. It carries out the reaction guanosine(37) in tRNA + S-adenosyl-L-methionine = N(1)-methylguanosine(37) in tRNA + S-adenosyl-L-homocysteine + H(+). Specifically methylates guanosine-37 in various tRNAs. In Nitrobacter hamburgensis (strain DSM 10229 / NCIMB 13809 / X14), this protein is tRNA (guanine-N(1)-)-methyltransferase.